The primary structure comprises 370 residues: Cobalt-precorrin-5B C(1)-methyltransferase (370 aa).

It belongs to the CbiD family.

It carries out the reaction Co-precorrin-5B + S-adenosyl-L-methionine = Co-precorrin-6A + S-adenosyl-L-homocysteine. It functions in the pathway cofactor biosynthesis; adenosylcobalamin biosynthesis; cob(II)yrinate a,c-diamide from sirohydrochlorin (anaerobic route): step 6/10. Its function is as follows. Catalyzes the methylation of C-1 in cobalt-precorrin-5B to form cobalt-precorrin-6A. This Pseudomonas savastanoi pv. phaseolicola (strain 1448A / Race 6) (Pseudomonas syringae pv. phaseolicola (strain 1448A / Race 6)) protein is Cobalt-precorrin-5B C(1)-methyltransferase.